The primary structure comprises 186 residues: ATP synthase subunit delta (186 aa).

It belongs to the ATPase delta chain family. As to quaternary structure, F-type ATPases have 2 components, F(1) - the catalytic core - and F(0) - the membrane proton channel. F(1) has five subunits: alpha(3), beta(3), gamma(1), delta(1), epsilon(1). CF(0) has four main subunits: a(1), b(1), b'(1) and c(10-14). The alpha and beta chains form an alternating ring which encloses part of the gamma chain. F(1) is attached to F(0) by a central stalk formed by the gamma and epsilon chains, while a peripheral stalk is formed by the delta, b and b' chains.

It is found in the cell inner membrane. In terms of biological role, f(1)F(0) ATP synthase produces ATP from ADP in the presence of a proton or sodium gradient. F-type ATPases consist of two structural domains, F(1) containing the extramembraneous catalytic core and F(0) containing the membrane proton channel, linked together by a central stalk and a peripheral stalk. During catalysis, ATP synthesis in the catalytic domain of F(1) is coupled via a rotary mechanism of the central stalk subunits to proton translocation. Its function is as follows. This protein is part of the stalk that links CF(0) to CF(1). It either transmits conformational changes from CF(0) to CF(1) or is implicated in proton conduction. This chain is ATP synthase subunit delta, found in Rhodopseudomonas palustris (strain HaA2).